A 473-amino-acid chain; its full sequence is Histone-lysine N-methyltransferase ATXR2 (473 aa).

Residues 33-441 (KLITSRRCNG…KNEEVTISYI (409 aa)) form the SET domain. The segment at 134-203 (EEQCGGSSSS…DWESSHSLLC (70 aa)) adopts an MYND-type; degenerate zinc-finger fold. Residues Cys176, Cys180, His199, and Cys203 each coordinate Zn(2+). Residue Tyr440 coordinates S-adenosyl-L-methionine.

This sequence belongs to the class V-like SAM-binding methyltransferase superfamily. Histone-lysine methyltransferase family. TRX/MLL subfamily. In terms of assembly, interacts with JMJ30. Binds to ARF7 and ARF19 in the nucleus.

The protein localises to the nucleus. The catalysed reaction is L-lysyl-[histone] + S-adenosyl-L-methionine = N(6)-methyl-L-lysyl-[histone] + S-adenosyl-L-homocysteine + H(+). Functionally, histone methyltransferase that methylates 'Lys-36' (H3K36me) of histone H3 to produce H3K36me3. Promotes early stages of cellular dedifferentiation through H3K36me3-dependent, and to a lesser degree H3K4me3-dependent, activation of Lateral organ Boundaries-Domain (LBD) (e.g. LBD16 and LBD29) genes. Positive regulator of root organogenesis including lateral root formation as well as adventitious root formation from wounded leaf tissues. Recruited by JMJ30/ARF (e.g. ARF7 and ARF19) complexes to promote the deposition of H3K36me3 and, to a lower extent, H3K4me3 at LBD genes promoters, thus ensuring their stable activation during callus formation on callus-inducing medium (CIM). This chain is Histone-lysine N-methyltransferase ATXR2, found in Arabidopsis thaliana (Mouse-ear cress).